A 395-amino-acid chain; its full sequence is Protein pelota (395 aa).

The short motif at 210-212 (PGF) is the PGF motif element. Positions 371–395 (PELEDSDDDDDEDGAAGGVADSDSD) are disordered. Over residues 372-384 (ELEDSDDDDDEDG) the composition is skewed to acidic residues.

The protein belongs to the eukaryotic release factor 1 family. Pelota subfamily. As to quaternary structure, component of the Pelota-HBS1L complex, also named Dom34-Hbs1 complex, composed of pelo and HBS1. Interacts with Pink1 and Cnot4; the interaction with Cnot4 appears to be Pink1-dependent. A divalent metal cation serves as cofactor. In terms of tissue distribution, expressed in ovaries and muscles (at protein level). Expressed throughout all development stages.

It is found in the nucleus. Its subcellular location is the cytoplasm. In terms of biological role, component of the Pelota-HBS1L complex, a complex that recognizes stalled ribosomes and triggers the No-Go Decay (NGD) pathway. In the Pelota-HBS1L complex, pelo recognizes ribosomes stalled at the 3' end of an mRNA and engages stalled ribosomes by destabilizing mRNA in the mRNA channel. Following ribosome-binding, the Pelota-HBS1L complex promotes recruitment of pix, which drives the disassembly of stalled ribosomes, followed by degradation of damaged mRNAs as part of the NGD pathway. Required prior to the first meiotic division for spindle formation and nuclear envelope breakdown during spermatogenesis. Together with HBS1, promotes spermatid individualization during spermatogenesis. Required for ovarian germ line stem cell self-renewal and oocyte development during oogenesis. Together with HSB1, required for transposon silencing in the ovary and testis. As part of the Pink1-regulated signaling, is recruited to damaged mitochondrial and is required for recruitment of autophagy receptors and induction of mitophagy. Required for normal eye patterning and for mitotic divisions in the ovary. The protein is Protein pelota (pelo) of Drosophila melanogaster (Fruit fly).